Reading from the N-terminus, the 24-residue chain is Brevinin-1GRa (24 aa).

Expressed by the skin glands.

Its subcellular location is the secreted. Antimicrobial peptide active against the Gram-positive bacterium S.aureus (MIC=12.5 uM) and against the Gram-negative bacteria E.coli (MIC=25 uM). The polypeptide is Brevinin-1GRa (Odorrana grahami (Yunnanfu frog)).